A 442-amino-acid chain; its full sequence is Ribulose bisphosphate carboxylase/oxygenase activase 1, chloroplastic (442 aa).

The N-terminal 58 residues, 1-58 (MATSVSTIGAVNKTPLSLNNSVAGTSVPSTAFFGKTLKKVYGKGVSSPKVTNKSLRIV), are a transit peptide targeting the chloroplast. Residue 169-176 (GGKGQGKS) coordinates ATP.

The protein belongs to the RuBisCO activase family.

Its subcellular location is the plastid. The protein localises to the chloroplast stroma. Activation of RuBisCO (ribulose-1,5-bisphosphate carboxylase/oxygenase; EC 4.1.1.39) involves the ATP-dependent carboxylation of the epsilon-amino group of lysine leading to a carbamate structure. In Nicotiana tabacum (Common tobacco), this protein is Ribulose bisphosphate carboxylase/oxygenase activase 1, chloroplastic.